Here is a 270-residue protein sequence, read N- to C-terminus: 4-diphosphocytidyl-2-C-methyl-D-erythritol kinase (270 aa).

The active site involves lysine 8. Proline 90–serine 100 contacts ATP. The active site involves aspartate 132.

This sequence belongs to the GHMP kinase family. IspE subfamily.

The catalysed reaction is 4-CDP-2-C-methyl-D-erythritol + ATP = 4-CDP-2-C-methyl-D-erythritol 2-phosphate + ADP + H(+). Its pathway is isoprenoid biosynthesis; isopentenyl diphosphate biosynthesis via DXP pathway; isopentenyl diphosphate from 1-deoxy-D-xylulose 5-phosphate: step 3/6. In terms of biological role, catalyzes the phosphorylation of the position 2 hydroxy group of 4-diphosphocytidyl-2C-methyl-D-erythritol. This is 4-diphosphocytidyl-2-C-methyl-D-erythritol kinase from Cytophaga hutchinsonii (strain ATCC 33406 / DSM 1761 / CIP 103989 / NBRC 15051 / NCIMB 9469 / D465).